Reading from the N-terminus, the 434-residue chain is Methylenetetrahydrofolate--tRNA-(uracil-5-)-methyltransferase TrmFO (434 aa).

10 to 15 contributes to the FAD binding site; the sequence is GAGLAG.

This sequence belongs to the MnmG family. TrmFO subfamily. The cofactor is FAD.

The protein resides in the cytoplasm. It catalyses the reaction uridine(54) in tRNA + (6R)-5,10-methylene-5,6,7,8-tetrahydrofolate + NADH + H(+) = 5-methyluridine(54) in tRNA + (6S)-5,6,7,8-tetrahydrofolate + NAD(+). The catalysed reaction is uridine(54) in tRNA + (6R)-5,10-methylene-5,6,7,8-tetrahydrofolate + NADPH + H(+) = 5-methyluridine(54) in tRNA + (6S)-5,6,7,8-tetrahydrofolate + NADP(+). Its function is as follows. Catalyzes the folate-dependent formation of 5-methyl-uridine at position 54 (M-5-U54) in all tRNAs. The protein is Methylenetetrahydrofolate--tRNA-(uracil-5-)-methyltransferase TrmFO of Bacillus mycoides (strain KBAB4) (Bacillus weihenstephanensis).